The chain runs to 331 residues: Adenosine deaminase (331 aa).

2 residues coordinate Zn(2+): H12 and H14. The substrate site is built by H14, D16, and G170. Zn(2+) is bound at residue H197. Residue E200 is the Proton donor of the active site. D278 is a binding site for Zn(2+). Residue D279 coordinates substrate.

This sequence belongs to the metallo-dependent hydrolases superfamily. Adenosine and AMP deaminases family. Adenosine deaminase subfamily. The cofactor is Zn(2+).

It carries out the reaction adenosine + H2O + H(+) = inosine + NH4(+). It catalyses the reaction 2'-deoxyadenosine + H2O + H(+) = 2'-deoxyinosine + NH4(+). In terms of biological role, catalyzes the hydrolytic deamination of adenosine and 2-deoxyadenosine. The polypeptide is Adenosine deaminase (Shewanella putrefaciens (strain CN-32 / ATCC BAA-453)).